We begin with the raw amino-acid sequence, 284 residues long: Hemin import ATP-binding protein HmuV (284 aa).

Residues Leu-33–Glu-266 form the ABC transporter domain. Residue Gly-65–Ser-72 participates in ATP binding.

It belongs to the ABC transporter superfamily. Heme (hemin) importer (TC 3.A.1.14.5) family. In terms of assembly, the complex is composed of two ATP-binding proteins (HmuV), two transmembrane proteins (HmuU) and a solute-binding protein (HmuT).

The protein resides in the cell membrane. Part of the ABC transporter complex HmuTUV involved in hemin import. Responsible for energy coupling to the transport system. The protein is Hemin import ATP-binding protein HmuV of Thermobifida fusca (strain YX).